Here is a 320-residue protein sequence, read N- to C-terminus: tRNA U34 carboxymethyltransferase (320 aa).

Residues lysine 89, tryptophan 103, lysine 108, glycine 128, 150–152 (DPT), 179–180 (LE), methionine 194, tyrosine 198, and arginine 313 each bind carboxy-S-adenosyl-L-methionine.

The protein belongs to the class I-like SAM-binding methyltransferase superfamily. CmoB family. In terms of assembly, homotetramer.

The enzyme catalyses carboxy-S-adenosyl-L-methionine + 5-hydroxyuridine(34) in tRNA = 5-carboxymethoxyuridine(34) in tRNA + S-adenosyl-L-homocysteine + H(+). Catalyzes carboxymethyl transfer from carboxy-S-adenosyl-L-methionine (Cx-SAM) to 5-hydroxyuridine (ho5U) to form 5-carboxymethoxyuridine (cmo5U) at position 34 in tRNAs. The polypeptide is tRNA U34 carboxymethyltransferase (Haemophilus ducreyi (strain 35000HP / ATCC 700724)).